Consider the following 248-residue polypeptide: 2,3-bisphosphoglycerate-dependent phosphoglycerate mutase (248 aa).

Substrate is bound by residues 8–15 (RHGESQWN), 21–22 (TG), Arg-60, 87–90 (ERHY), Lys-98, 114–115 (RR), and 183–184 (GN). The active-site Tele-phosphohistidine intermediate is the His-9. Residue Glu-87 is the Proton donor/acceptor of the active site.

This sequence belongs to the phosphoglycerate mutase family. BPG-dependent PGAM subfamily. In terms of assembly, homodimer.

It carries out the reaction (2R)-2-phosphoglycerate = (2R)-3-phosphoglycerate. The protein operates within carbohydrate degradation; glycolysis; pyruvate from D-glyceraldehyde 3-phosphate: step 3/5. In terms of biological role, catalyzes the interconversion of 2-phosphoglycerate and 3-phosphoglycerate. The protein is 2,3-bisphosphoglycerate-dependent phosphoglycerate mutase of Alteromonas mediterranea (strain DSM 17117 / CIP 110805 / LMG 28347 / Deep ecotype).